The primary structure comprises 94 residues: Ribonuclease P protein component 1 (94 aa).

Belongs to the eukaryotic/archaeal RNase P protein component 1 family. As to quaternary structure, consists of a catalytic RNA component and at least 4-5 protein subunits.

Its subcellular location is the cytoplasm. It catalyses the reaction Endonucleolytic cleavage of RNA, removing 5'-extranucleotides from tRNA precursor.. Its function is as follows. Part of ribonuclease P, a protein complex that generates mature tRNA molecules by cleaving their 5'-ends. The protein is Ribonuclease P protein component 1 of Thermofilum pendens (strain DSM 2475 / Hrk 5).